The chain runs to 545 residues: CTP synthase (545 aa).

Residues 1–266 (MTTNYIFVTG…DDYICKRFSL (266 aa)) form an amidoligase domain region. Ser14 is a binding site for CTP. Ser14 lines the UTP pocket. ATP is bound by residues 15–20 (SLGKGI) and Asp72. Mg(2+) contacts are provided by Asp72 and Glu140. CTP is bound by residues 147–149 (DIE), 187–192 (KTKPTQ), and Lys223. Residues 187–192 (KTKPTQ) and Lys223 contribute to the UTP site. 239 to 241 (KDI) is a binding site for ATP. The 252-residue stretch at 291 to 542 (TIGMVGKYVA…VKAAGAYQKR (252 aa)) folds into the Glutamine amidotransferase type-1 domain. Gly352 contributes to the L-glutamine binding site. Cys379 acts as the Nucleophile; for glutamine hydrolysis in catalysis. L-glutamine-binding positions include 380–383 (LGMQ), Glu403, and Arg470. Catalysis depends on residues His515 and Glu517.

It belongs to the CTP synthase family. As to quaternary structure, homotetramer.

The enzyme catalyses UTP + L-glutamine + ATP + H2O = CTP + L-glutamate + ADP + phosphate + 2 H(+). The catalysed reaction is L-glutamine + H2O = L-glutamate + NH4(+). It catalyses the reaction UTP + NH4(+) + ATP = CTP + ADP + phosphate + 2 H(+). It participates in pyrimidine metabolism; CTP biosynthesis via de novo pathway; CTP from UDP: step 2/2. Allosterically activated by GTP, when glutamine is the substrate; GTP has no effect on the reaction when ammonia is the substrate. The allosteric effector GTP functions by stabilizing the protein conformation that binds the tetrahedral intermediate(s) formed during glutamine hydrolysis. Inhibited by the product CTP, via allosteric rather than competitive inhibition. Catalyzes the ATP-dependent amination of UTP to CTP with either L-glutamine or ammonia as the source of nitrogen. Regulates intracellular CTP levels through interactions with the four ribonucleotide triphosphates. The polypeptide is CTP synthase (Pectobacterium atrosepticum (strain SCRI 1043 / ATCC BAA-672) (Erwinia carotovora subsp. atroseptica)).